Reading from the N-terminus, the 799-residue chain is Lon protease 4 (799 aa).

The region spanning 15–204 is the Lon N-terminal domain; sequence FPLLPLRTGV…RVAGLLAEAS (190 aa). 356 to 363 lines the ATP pocket; that stretch reads GPPGVGKT. In terms of domain architecture, Lon proteolytic spans 595 to 776; that stretch reads TSVAGVATGL…SQVIAAALEE (182 aa). Catalysis depends on residues Ser682 and Lys725.

The protein belongs to the peptidase S16 family. Homohexamer. Organized in a ring with a central cavity.

The protein localises to the cytoplasm. The enzyme catalyses Hydrolysis of proteins in presence of ATP.. In terms of biological role, ATP-dependent serine protease that mediates the selective degradation of mutant and abnormal proteins as well as certain short-lived regulatory proteins. Required for cellular homeostasis and for survival from DNA damage and developmental changes induced by stress. Degrades polypeptides processively to yield small peptide fragments that are 5 to 10 amino acids long. Binds to DNA in a double-stranded, site-specific manner. The chain is Lon protease 4 from Sorangium cellulosum (strain So ce56) (Polyangium cellulosum (strain So ce56)).